Reading from the N-terminus, the 243-residue chain is Probable fructoselysine utilization operon transcriptional repressor (243 aa).

In terms of domain architecture, HTH gntR-type spans 10 to 78 (QLLYATVRQR…QGKGTFVQSQ (69 aa)). The segment at residues 38–57 (ENELCTQYNVSRITIRKAIS) is a DNA-binding region (H-T-H motif).

The protein operates within carbohydrate metabolism; fructoselysine degradation [regulation]. In terms of biological role, may regulate the transcription of the frlABCDR operon, involved in the utilization of fructoselysine and psicoselysine. This Escherichia coli (strain K12) protein is Probable fructoselysine utilization operon transcriptional repressor.